The chain runs to 227 residues: Lysosomal-associated transmembrane protein 4B (227 aa).

Helical transmembrane passes span 26-46 (ILLGVWYLIINAVVLLILLSA), 72-92 (MCIAIAISLLMILICAMATYG), 100-120 (WIIPFFCYQIFDFALNTLVAI), and 153-173 (CLVLIILLFIGILLTLKGYLI). The segment at 205 to 222 (PPYDDATAVPSTAKEPPP) is required for NEDD4 interaction.

This sequence belongs to the LAPTM4/LAPTM5 transporter family. In terms of assembly, homooligomer; upon reaching the lysosomes. Interacts with MCOLN1. Interacts with NEDD4; may play a role in the lysosomal sorting of LAPTM4B; enhances HGS association with NEDD4; mediates inhibition of EGFR degradation. Interacts with PIP5K1C; promotes SNX5 association with LAPTM4B; kinase activity of PIP5K1C is required; interaction is regulated by phosphatidylinositol 4,5-bisphosphate generated by PIP5K1C. Interacts with HGS; promotes HGS ubiquitination. Interacts with SNX5. Interacts with SLC3A2 and SLC7A5; recruits SLC3A2 and SLC7A5 to lysosomes to promote leucine uptake into these organelles and is required for mTORC1 activation. Interacts with LRRC32; decreases TGFB1 production in regulatory T cells. Interacts with BECN1; competes with EGFR for LAPTM4B binding; regulates EGFR activity. Interacts with EGFR; positively correlates with EGFR activation. Undergoes proteolytic cleavage following delivery to the lysosomes. Post-translationally, ubiquitinated by NEDD4.

It is found in the endomembrane system. It localises to the late endosome membrane. Its subcellular location is the cell membrane. The protein localises to the cell projection. The protein resides in the lysosome membrane. It is found in the endosome membrane. It localises to the endosome. Its subcellular location is the multivesicular body membrane. The protein localises to the multivesicular body lumen. In terms of biological role, required for optimal lysosomal function. Blocks EGF-stimulated EGFR intraluminal sorting and degradation. Conversely by binding with the phosphatidylinositol 4,5-bisphosphate, regulates its PIP5K1C interaction, inhibits HGS ubiquitination and relieves LAPTM4B inhibition of EGFR degradation. Recruits SLC3A2 and SLC7A5 (the Leu transporter) to the lysosome, promoting entry of leucine and other essential amino acid (EAA) into the lysosome, stimulating activation of proton-transporting vacuolar (V)-ATPase protein pump (V-ATPase) and hence mTORC1 activation. Plays a role as negative regulator of TGFB1 production in regulatory T cells. Binds ceramide and facilitates its exit from late endosome in order to control cell death pathways. The chain is Lysosomal-associated transmembrane protein 4B from Mus musculus (Mouse).